Reading from the N-terminus, the 331-residue chain is Polyprenyl transferase mpaA' (331 aa).

8 helical membrane passes run 27–47, 56–76, 127–147, 159–179, 190–210, 240–260, 264–284, and 295–315; these read MPYY…ALKL, IEFI…LCGA, LILD…SIML, VFVY…ITGW, GDII…CVYF, LFLA…ISTI, WLWV…IAQF, and IHWD…VEVG.

It belongs to the UbiA prenyltransferase family. Mg(2+) serves as cofactor.

It is found in the golgi apparatus membrane. It catalyses the reaction 5,7-dihydroxy-4-methylphthalide + (2E,6E)-farnesyl diphosphate = 4-farnesyl-3,5-dihydroxy-6-methylphthalide + diphosphate. The protein operates within secondary metabolite biosynthesis; terpenoid biosynthesis. In terms of biological role, polyprenyl transferase; part of the gene cluster that mediates the biosynthesis of mycophenolic acid (MPA), the first isolated antibiotic natural product in the world obtained from a culture of Penicillium brevicompactum in 1893. MpaA' is a Golgi apparatus-associated enzyme that catalyzes the prenylation of 5,7-dihydroxy-4,6-dimethylphthalide (DHMP) to yield farnesyl-DHMP (FDHMP). The first step of the pathway is the synthesis of 5-methylorsellinic acid (5MOA) by the cytosolic polyketide synthase mpaC. 5MOA is then converted to the phthalide compound 5,7-dihydroxy-4,6-dimethylphthalide (DHMP) by the endoplasmic reticulum-bound cytochrome P450 monooxygenase mpaDE. MpaDE first catalyzes hydroxylation of 5-MOA to 4,6-dihydroxy-2-(hydroxymethyl)-3-methylbenzoic acid (DHMB). MpaDE then acts as a lactone synthase that catalyzes the ring closure to convert DHMB into DHMP. The next step is the prenylation of DHMP by the Golgi apparatus-associated prenyltransferase mpaA to yield farnesyl-DHMP (FDHMP). The ER-bound oxygenase mpaB then mediates the oxidative cleavage the C19-C20 double bond in FDHMP to yield FDHMP-3C via a mycophenolic aldehyde intermediate. The O-methyltransferase mpaG catalyzes the methylation of FDHMP-3C to yield MFDHMP-3C. After the cytosolic methylation of FDHMP-3C, MFDHMP-3C enters into peroxisomes probably via free diffusion due to its low molecular weight. Upon a peroxisomal CoA ligation reaction, catalyzed by a beta-oxidation component enzyme acyl-CoA ligase ACL891, MFDHMP-3C-CoA would then be restricted to peroxisomes for the following beta-oxidation pathway steps. The peroxisomal beta-oxidation machinery than converts MFDHMP-3C-CoA into MPA_CoA, via a beta-oxidation chain-shortening process. Finally mpaH acts as a peroxisomal acyl-CoA hydrolase with high substrate specificity toward MPA-CoA to release the final product MPA. The sequence is that of Polyprenyl transferase mpaA' from Penicillium brevicompactum.